Consider the following 182-residue polypeptide: Negative transcriptional regulator PadR (182 aa).

This sequence belongs to the PadR family. In terms of assembly, homodimer.

Its subcellular location is the cytoplasm. Its activity is regulated as follows. PadR repressor activity is inhibited in the presence of phenolic acids, which directly modulate PadR binding to the promoter of padC, leading to the dissociation of PadR from the operator DNA and expression of padC. In the presence of MgCl(2), binding is not altered by phenolic acids. Functionally, transcriptional regulator involved in the regulation of the metabolism of phenolic acids. In the absence of phenolic acids, represses the expression of padC, which encodes a phenolic acid decarboxylase (PAD) involved in the detoxification of harmful phenolic acids. Acts by binding to the padC promoter region, preventing the transcription of the gene. In Bacillus subtilis (strain 168), this protein is Negative transcriptional regulator PadR.